A 339-amino-acid chain; its full sequence is 2-keto-3-deoxygluconate permease (339 aa).

10 consecutive transmembrane segments (helical) span residues 10–30 (IPGGMMLVPLFLGALCHTFAP), 42–62 (GLISGTVPILAVWFFCMGASI), 77–97 (LVVTKIAVAWVVAAVASRILP), 100–120 (GVEVGFFAGLSTLALVAAMDM), 141–161 (AFVLMSLESGPLMTMVILGTA), 163–183 (IASFEPHVFVGAVLPFLVGFA), 199–219 (VQTLIPFFAFALGNTIDLSVI), 224–244 (LLGVLLGISVIIITGIPLIVA), 254–274 (TAGIAASSSAGAAVATPVLIA), and 289–309 (TLVATSVIVTSVLVPIITAMW). Positions 315 to 339 (GGDGTVPKEDAVEEKAEQQRRRIIK) are disordered. Over residues 320 to 339 (VPKEDAVEEKAEQQRRRIIK) the composition is skewed to basic and acidic residues.

The protein belongs to the KdgT transporter family.

The protein resides in the cell inner membrane. It catalyses the reaction 2-dehydro-3-deoxy-D-gluconate(in) + H(+)(in) = 2-dehydro-3-deoxy-D-gluconate(out) + H(+)(out). Uptake is inhibited by the protonophore uncouplers carbonyl cyanide m-chlorophenylhydrazone (CCCP) and 2,4-dinitrophenol, and by NaN(3). Catalyzes the proton-dependent uptake of 2-keto-3-deoxygluconate (KDG) into the cell. Can also mediate the uptake of glucuronate with a low affinity, and may mediate the uptake of 5-keto-4-deoxyuronate (DKI) and 2,5-diketo-3-deoxygluconate (DKII), which are intermediates in pectin degradation. In Dickeya chrysanthemi (Pectobacterium chrysanthemi), this protein is 2-keto-3-deoxygluconate permease.